Here is a 90-residue protein sequence, read N- to C-terminus: Antitoxin epsilon (90 aa).

It belongs to the epsilon antitoxin family. In the presence of the zeta toxin, forms an inactive PezA(2)PezT(2) heterotetramer. The heterotetramer is still able to bind the zeta toxin substrate UNAG.

Its function is as follows. Antitoxin component of a type II toxin-antitoxin (TA) system. Neutralizes the toxic effect of cognate zeta toxin. Part of a postsegregational killing (PSK) system involved in the killing of plasmid-free cells. Continuous synthesis of the epsilon antitoxin is required to counteract the zeta toxin. The chain is Antitoxin epsilon from Streptococcus pyogenes.